A 385-amino-acid polypeptide reads, in one-letter code: 2-oxoglutarate-dependent dioxygenase AFUA_1G01000 (385 aa).

Residues 203–327 enclose the Fe2OG dioxygenase domain; the sequence is PSDDFLRLLR…RYSVLVGTRP (125 aa). Histidine 230, aspartate 232, and histidine 304 together coordinate Fe cation. Residue arginine 318 coordinates 2-oxoglutarate.

The protein belongs to the iron/ascorbate-dependent oxidoreductase family. Fe(2+) serves as cofactor.

In terms of biological role, 2-oxoglutarate-dependent dioxygenase; part of the gene cluster that mediates the biosynthesis of fumigermin that inhibits germination of spores of the inducing S.rapamycinicus, and thus helps the fungus to defend resources in the shared habitat against a bacterial competitor. The partially reducing polyketide synthase fngA alone is sufficient for the production of fumigermin. FgnA catalyzes the condensation of 3 malonyl-CoA units to an acetyl-CoA starter, and 3 methylations to yield fumigermin. It is remarkable that the five cluster genes including fgnA are conserved in distantly related fungi, supporting the assumption of a fumigermin cluster; it is thus possible that originally all five genes were functional, but that the genes encoding tailoring enzymes became inactive from mutations, similar to the case of the fgnA gene in strains A1163 and Af293. In Aspergillus fumigatus (strain ATCC MYA-4609 / CBS 101355 / FGSC A1100 / Af293) (Neosartorya fumigata), this protein is 2-oxoglutarate-dependent dioxygenase AFUA_1G01000.